Consider the following 400-residue polypeptide: MEKLTIRDVDLKGKRVIMRVDFNVPIKDGVVTDDTRIVEALPTIKYVLEQGAKVILLTHLGRPKGGPDPKYTVKPAAERLAQLLGKEVKFVPALYGEEVEKAVAELKEGEVLMLENTRFDPGEEKNDLELAKKWASLADIHVNDAFGTAHRAHSSNVGIAQYIPSVAGFLMEKEIKFLSKATHNPDKPYVVVLGGAKVSDKIGVITNLLNKADKIIIGGAMMFTFWRALGKQTGNSLVEEDKIDLAKQLLEQAKEKGVELVIPTDAVCAQKMEAGVEKKVFTCEEGIPEGWAGYDIGPASIELIKSKLADAKTIVWNGPLGVFEIEDFANGTKAVAEFIASLTDKGVTTVVGGGDSAAAVSQFGLEKKFSHVSTGGGASLEFLEGKELPGIASIADKKKQ.

Residues D21–N23, R36, H59–R62, R118, and R151 each bind substrate. Residues K201, G293, E324, and G353–S356 each bind ATP.

This sequence belongs to the phosphoglycerate kinase family. In terms of assembly, monomer.

It localises to the cytoplasm. The catalysed reaction is (2R)-3-phosphoglycerate + ATP = (2R)-3-phospho-glyceroyl phosphate + ADP. It participates in carbohydrate degradation; glycolysis; pyruvate from D-glyceraldehyde 3-phosphate: step 2/5. This Fervidobacterium nodosum (strain ATCC 35602 / DSM 5306 / Rt17-B1) protein is Phosphoglycerate kinase.